The following is a 209-amino-acid chain: Kynurenine formamidase (209 aa).

Trp-20 lines the substrate pocket. His-50, His-54, and Asp-56 together coordinate Zn(2+). His-60 functions as the Proton donor/acceptor in the catalytic mechanism. Residues His-161 and Glu-173 each coordinate Zn(2+).

This sequence belongs to the Cyclase 1 superfamily. KynB family. As to quaternary structure, homodimer. Requires Zn(2+) as cofactor.

The catalysed reaction is N-formyl-L-kynurenine + H2O = L-kynurenine + formate + H(+). Its pathway is amino-acid degradation; L-tryptophan degradation via kynurenine pathway; L-kynurenine from L-tryptophan: step 2/2. In terms of biological role, catalyzes the hydrolysis of N-formyl-L-kynurenine to L-kynurenine, the second step in the kynurenine pathway of tryptophan degradation. The protein is Kynurenine formamidase of Bacillus anthracis.